Here is a 344-residue protein sequence, read N- to C-terminus: N-acetyl-gamma-glutamyl-phosphate reductase (344 aa).

Residue C148 is part of the active site.

This sequence belongs to the NAGSA dehydrogenase family. Type 1 subfamily.

The protein localises to the cytoplasm. It catalyses the reaction N-acetyl-L-glutamate 5-semialdehyde + phosphate + NADP(+) = N-acetyl-L-glutamyl 5-phosphate + NADPH + H(+). It functions in the pathway amino-acid biosynthesis; L-arginine biosynthesis; N(2)-acetyl-L-ornithine from L-glutamate: step 3/4. Functionally, catalyzes the NADPH-dependent reduction of N-acetyl-5-glutamyl phosphate to yield N-acetyl-L-glutamate 5-semialdehyde. In Clostridium botulinum (strain Eklund 17B / Type B), this protein is N-acetyl-gamma-glutamyl-phosphate reductase.